Here is a 233-residue protein sequence, read N- to C-terminus: Aspartate/glutamate leucyltransferase (233 aa).

Belongs to the R-transferase family. Bpt subfamily.

It localises to the cytoplasm. The enzyme catalyses N-terminal L-glutamyl-[protein] + L-leucyl-tRNA(Leu) = N-terminal L-leucyl-L-glutamyl-[protein] + tRNA(Leu) + H(+). It catalyses the reaction N-terminal L-aspartyl-[protein] + L-leucyl-tRNA(Leu) = N-terminal L-leucyl-L-aspartyl-[protein] + tRNA(Leu) + H(+). Functions in the N-end rule pathway of protein degradation where it conjugates Leu from its aminoacyl-tRNA to the N-termini of proteins containing an N-terminal aspartate or glutamate. This Vibrio campbellii (strain ATCC BAA-1116) protein is Aspartate/glutamate leucyltransferase.